We begin with the raw amino-acid sequence, 368 residues long: Glutamate 5-kinase (368 aa).

Lys9 serves as a coordination point for ATP. 3 residues coordinate substrate: Ser49, Asp136, and Asn148. ATP contacts are provided by residues Thr168–Asp169 and Thr210–Lys216. One can recognise a PUA domain in the interval Ala275–Glu353.

It belongs to the glutamate 5-kinase family.

Its subcellular location is the cytoplasm. The enzyme catalyses L-glutamate + ATP = L-glutamyl 5-phosphate + ADP. It participates in amino-acid biosynthesis; L-proline biosynthesis; L-glutamate 5-semialdehyde from L-glutamate: step 1/2. Catalyzes the transfer of a phosphate group to glutamate to form L-glutamate 5-phosphate. This Haemophilus influenzae (strain 86-028NP) protein is Glutamate 5-kinase.